We begin with the raw amino-acid sequence, 1157 residues long: ATP-dependent helicase/deoxyribonuclease subunit B (1157 aa).

The region spanning 1-277 (MTLQIIAGKA…KILLENKRAN (277 aa)) is the UvrD-like helicase ATP-binding domain. Residue 8–15 (GKAGTGKT) participates in ATP binding. Residues 271 to 590 (LENKRANSDS…VLADMENAKL (320 aa)) enclose the UvrD-like helicase C-terminal domain. [4Fe-4S] cluster contacts are provided by C794, C1115, C1118, and C1124.

Belongs to the helicase family. AddB/RexB type 1 subfamily. Heterodimer of AddA and AddB. Mg(2+) serves as cofactor. [4Fe-4S] cluster is required as a cofactor.

Its function is as follows. The heterodimer acts as both an ATP-dependent DNA helicase and an ATP-dependent, dual-direction single-stranded exonuclease. Recognizes the chi site generating a DNA molecule suitable for the initiation of homologous recombination. The AddB subunit has 5' -&gt; 3' nuclease activity but not helicase activity. The polypeptide is ATP-dependent helicase/deoxyribonuclease subunit B (Listeria innocua serovar 6a (strain ATCC BAA-680 / CLIP 11262)).